A 451-amino-acid chain; its full sequence is 3-phosphoshikimate 1-carboxyvinyltransferase (451 aa).

3-phosphoshikimate-binding residues include lysine 30, serine 31, and arginine 35. A phosphoenolpyruvate-binding site is contributed by lysine 30. Phosphoenolpyruvate-binding residues include glycine 101 and arginine 130. 3-phosphoshikimate-binding residues include serine 176, serine 177, glutamine 178, aspartate 321, and lysine 348. Position 178 (glutamine 178) interacts with phosphoenolpyruvate. Catalysis depends on aspartate 321, which acts as the Proton acceptor. Phosphoenolpyruvate-binding residues include arginine 352 and glutamine 422.

It belongs to the EPSP synthase family. Monomer.

It localises to the cytoplasm. The catalysed reaction is 3-phosphoshikimate + phosphoenolpyruvate = 5-O-(1-carboxyvinyl)-3-phosphoshikimate + phosphate. Its pathway is metabolic intermediate biosynthesis; chorismate biosynthesis; chorismate from D-erythrose 4-phosphate and phosphoenolpyruvate: step 6/7. Functionally, catalyzes the transfer of the enolpyruvyl moiety of phosphoenolpyruvate (PEP) to the 5-hydroxyl of shikimate-3-phosphate (S3P) to produce enolpyruvyl shikimate-3-phosphate and inorganic phosphate. This Burkholderia pseudomallei (strain K96243) protein is 3-phosphoshikimate 1-carboxyvinyltransferase.